A 368-amino-acid polypeptide reads, in one-letter code: MVHKSPPSRRACRKYGGVFDVAAYEARIATLEAAAAAPDFWSERARAEALLAELKTLRATLEPWRALRRESADLRALYELAREAQDASLEPELSSLFSDISARFEEASLTRLLHEEVDRLDAFVTIHSGAGGVEACDWAQMLMRMYTRWAERRSFCVHIVDLLESEGGVKSVTLKICGSHAFGFLKGETGVHRLVRISPFDSAARRHTSFTSTYVFPVLDDHVEVHIRSEDMRVDTYRSGGAGGQHVNKTDSAVRITHLPTGIVVTCQNERSQISNRATALSLLRARLYAYERQKKQQEHQRFASEKKDISWGNQIRSYVFHPYTMVKDHRSKCETGNIHAVMDGALEPFIRSYLEFLCTSTQCVEPQ.

An N5-methylglutamine modification is found at Gln-245.

The protein belongs to the prokaryotic/mitochondrial release factor family. Methylated by PrmC. Methylation increases the termination efficiency of RF2.

Its subcellular location is the cytoplasm. Functionally, peptide chain release factor 2 directs the termination of translation in response to the peptide chain termination codons UGA and UAA. The protein is Peptide chain release factor 2 (prfB) of Treponema pallidum (strain Nichols).